Consider the following 541-residue polypeptide: MPGINGAGPSNFFWQWRTDGEPVTEREHDSSRSASSANSPELPPPASPAESGRQRLLRSSALSRQTREWLEATPARVQGANPPAEARQSPEAQQAERIVQELVRGGADLNNVRTMLRNVMDNNAVAFSRVERDILLQHFPNMPMTGISSDSVLANELRQRLRQTVRQQRALVQSSTPARLADSSSGSSQRSLIGRSTMLMTPGRSSSSSAAASRTSVDRHPQGLDLESARLASAARHNHSANQTNEALRRLTQEGVDMERLRTSLGRYIMSLEPLPPDLRRALESVGINPFIPEELSLVDHPVLNFSAALNRMLASRQTTTNSPELPPLASSAESGRRRLLRSPPLLSGQREWIEQNMRQGAEPQSSRLNRAVRLAVMPPQKENEDNVAYAIRLRRLNPGADVSRVVASFITDPAARQQVVDDIRAALDIAPQFSQLRTISKADAESEELGFRDAADHPDNATSCLFGEELSLSNPDQQVIGLAVNPTDKPQPYSQEVNKALTFMDMKKLAQYLADKPEHPLNRQRLDAKNISKYAFKIVP.

Disordered stretches follow at residues 1–94, 168–222, and 317–338; these read MPGI…EAQQ, QRAL…RHPQ, and RQTT…SGRR. The segment covering 18-31 has biased composition (basic and acidic residues); the sequence is TDGEPVTEREHDSS. A compositionally biased stretch (low complexity) spans 183–196; the sequence is SSSGSSQRSLIGRS.

This sequence belongs to the HopAB family.

Its subcellular location is the secreted. In terms of biological role, effector protein that plays different roles depending on the species and plant cultivars that interact with the pathogen. Acts as a virulence determinant by enhancing the development of disease symptoms and bacterial growth. Acts as an avirulence factor by eliciting hypersensitive response (HR) and plant resistance. This chain is Effector protein hopAB1 (hopAB1), found in Pseudomonas savastanoi (Pseudomonas syringae pv. savastanoi).